Reading from the N-terminus, the 989-residue chain is MADSGDKSQGMRPPPFDSRGHPLPRRASPDKSITLENHRLARDTSSRVTSSSALGVTESQPQLKSSPTRRNSSGESEPTNWFNQSNRNPAAAFHDESHIMEVDPPFYQKETDSSNEESRYPPGRNPVHPPGGVQLPGFRPVAAHSSAADDYRSVIDDLTVENKRLKEELKRYKQFGSDVMRKEKLFEIKVHGLPRRKKRELEATLRDFAASLGDSSESTSQRRKTGRHGTAVHSSGVSLSKHDSSSSSRSRPVDSAYNSMSTGRSSHAPHSSGPSLGRPSLTRAKSVGTQKVENYLRDTPDGLLPHHIVMTDKEKKKLVVRRLEQLFTGKISGRNMQRNQSMPSMDAPLAPEGTNMAPPRPPPEGLREACIQLQDGDNPRKNRSSKDNGSASNSGGDQTELGGTGTGSGDGSGSGGRTGNNTSPPGAIAPDQRPTRPRDLDPDRVQIPSENMDYIRHLGLVSPEFLQGSRTSYQDVAPDAEGWVYLNLLCNLAQLHMVNVTPSFIRQAVSEKSTKFQLSADGRKIRWRGGTDGTKFSSDSSEDKSQQSPMTEDTEDGSDKNGRRKKRKTQQASSEIGRFGPSRSPSDTFHYKPMFVHRNSSSIETSLEESMSQGSEDAVDESNMGNSKWDFSGSGTTQQRRKRRYDGAIVYYTGAPFCTDLSGDPGDMSPTAQMTAGREVEGSGSGDEVEHVLQRTLSGSSLPIRPLSDDRARVAEVLDFDPGNPPELVADDGSSPNDEDFVFPWCEDPAKVRIQPIAKEVMEPSGLGGVLPDDHFVMLVTTRRVVRPILQRQLSRSTTSEDTAEFIAERLAAIRTSSPLPPRSHRLTVAPLQVEYVSGQFRRLNPAPLPPPAIFYPPFSTDSSWDDGDDLASDDEEVEEVEEDSYSEGQISRRANPHFSDNNTYMRKDDLAFDTETDVRMDSDDNRLSDSGHNMRAMMPRAEAVDGDDSPLAAVTGKEVDMLHTGSSVATAGGAESGYSSSMEDVSSS.

Disordered stretches follow at residues 1-139 (MADS…PGFR), 208-290 (FAAS…VGTQ), and 331-445 (ISGR…PDRV). Residues 36–45 (ENHRLARDTS) are compositionally biased toward basic and acidic residues. The segment covering 46-88 (SRVTSSSALGVTESQPQLKSSPTRRNSSGESEPTNWFNQSNRN) has biased composition (polar residues). Residues 109-119 (KETDSSNEESR) are compositionally biased toward basic and acidic residues. Residues 233–255 (HSSGVSLSKHDSSSSSRSRPVDS) are compositionally biased toward low complexity. Composition is skewed to polar residues over residues 256 to 274 (AYNSMSTGRSSHAPHSSGP) and 334 to 343 (RNMQRNQSMP). The span at 377 to 386 (DNPRKNRSSK) shows a compositional bias: basic and acidic residues. Over residues 387–397 (DNGSASNSGGD) the composition is skewed to polar residues. The span at 402 to 418 (GGTGTGSGDGSGSGGRT) shows a compositional bias: gly residues. Over residues 433-444 (RPTRPRDLDPDR) the composition is skewed to basic and acidic residues. At Thr501 the chain carries Phosphothreonine. Ser513 and Ser519 each carry phosphoserine. Disordered regions lie at residues 524–642 (KIRW…QRRK), 865–907 (WDDG…TYMR), and 968–989 (SVATAGGAESGYSSSMEDVSSS). The Nuclear localization signal signature appears at 564 to 568 (RKKRK). Positions 598–615 (RNSSSIETSLEESMSQGS) are enriched in polar residues. The span at 865 to 886 (WDDGDDLASDDEEVEEVEEDSY) shows a compositional bias: acidic residues. Over residues 978–989 (GYSSSMEDVSSS) the composition is skewed to polar residues.

This sequence belongs to the FRQ family. In terms of processing, progressive phosphorylation during the late circadian day and early night. Phosphorylation is also involved in regulating frq degradation. Phosphorylation by CKII may have at least three functions; it decreases the stability of frq, reduces the protein complex formation between frq and the white collar proteins, and is important for the closing of the Neurospora circadian negative feedback loop.

The protein resides in the nucleus. In terms of biological role, circadian clock component involved in the generation of biological rhythms, in particular in rhythm stability, period length, and temperature compensation. Oscillates in abundance with a daily peak early in the morning. Behaves as a negative element in circadian transcriptional loop. May bind to wc-2 protein. The complex frq-wc-2 may turn off the expression of frq. This chain is Frequency clock protein (frq), found in Neurospora crassa (strain ATCC 24698 / 74-OR23-1A / CBS 708.71 / DSM 1257 / FGSC 987).